Consider the following 545-residue polypeptide: Hydroxylamine reductase (545 aa).

[4Fe-4S] cluster-binding residues include cysteine 7, cysteine 10, cysteine 19, and cysteine 25. Positions 241, 265, 309, 400, 428, 453, 488, and 490 each coordinate hybrid [4Fe-2O-2S] cluster. The residue at position 400 (cysteine 400) is a Cysteine persulfide; in oxidized form.

This sequence belongs to the HCP family. As to quaternary structure, monomer. [4Fe-4S] cluster serves as cofactor. It depends on hybrid [4Fe-2O-2S] cluster as a cofactor.

The protein resides in the cytoplasm. The enzyme catalyses A + NH4(+) + H2O = hydroxylamine + AH2 + H(+). Its function is as follows. Catalyzes the reduction of hydroxylamine to form NH(3) and H(2)O. This Desulfovibrio desulfuricans (strain ATCC 27774 / DSM 6949 / MB) protein is Hydroxylamine reductase.